The chain runs to 919 residues: Valine--tRNA ligase (919 aa).

Residues P46 to H56 carry the 'HIGH' region motif. A 'KMSKS' region motif is present at residues K528–S532. Residue K531 coordinates ATP. Positions L849–G919 form a coiled coil.

It belongs to the class-I aminoacyl-tRNA synthetase family. ValS type 1 subfamily. In terms of assembly, monomer.

Its subcellular location is the cytoplasm. The catalysed reaction is tRNA(Val) + L-valine + ATP = L-valyl-tRNA(Val) + AMP + diphosphate. In terms of biological role, catalyzes the attachment of valine to tRNA(Val). As ValRS can inadvertently accommodate and process structurally similar amino acids such as threonine, to avoid such errors, it has a 'posttransfer' editing activity that hydrolyzes mischarged Thr-tRNA(Val) in a tRNA-dependent manner. The protein is Valine--tRNA ligase of Francisella tularensis subsp. tularensis (strain SCHU S4 / Schu 4).